The following is a 1385-amino-acid chain: DNA-directed RNA polymerase subunit beta' (1385 aa).

4 residues coordinate Zn(2+): Cys75, Cys77, Cys90, and Cys93. The Mg(2+) site is built by Asp466, Asp468, and Asp470. 4 residues coordinate Zn(2+): Cys809, Cys883, Cys890, and Cys893.

Belongs to the RNA polymerase beta' chain family. The RNAP catalytic core consists of 2 alpha, 1 beta, 1 beta' and 1 omega subunit. When a sigma factor is associated with the core the holoenzyme is formed, which can initiate transcription. Requires Mg(2+) as cofactor. Zn(2+) serves as cofactor.

It carries out the reaction RNA(n) + a ribonucleoside 5'-triphosphate = RNA(n+1) + diphosphate. DNA-dependent RNA polymerase catalyzes the transcription of DNA into RNA using the four ribonucleoside triphosphates as substrates. This is DNA-directed RNA polymerase subunit beta' from Nitratidesulfovibrio vulgaris (strain ATCC 29579 / DSM 644 / CCUG 34227 / NCIMB 8303 / VKM B-1760 / Hildenborough) (Desulfovibrio vulgaris).